A 222-amino-acid polypeptide reads, in one-letter code: GTP cyclohydrolase 1 (222 aa).

Positions 111, 114, and 182 each coordinate Zn(2+).

It belongs to the GTP cyclohydrolase I family. As to quaternary structure, toroid-shaped homodecamer, composed of two pentamers of five dimers.

The enzyme catalyses GTP + H2O = 7,8-dihydroneopterin 3'-triphosphate + formate + H(+). It functions in the pathway cofactor biosynthesis; 7,8-dihydroneopterin triphosphate biosynthesis; 7,8-dihydroneopterin triphosphate from GTP: step 1/1. The protein is GTP cyclohydrolase 1 of Enterobacter sp. (strain 638).